The following is a 797-amino-acid chain: Cleavage factor two protein 2 (797 aa).

2 disordered regions span residues 519–557 (ENDS…EVPS) and 677–703 (PSEE…KKEE). Residues 684-703 (KEEVEKKDGDKERNEEKKEE) are compositionally biased toward basic and acidic residues.

In terms of assembly, component of the cleavage and polyadenylation factor (CPF) complex, which is composed of cft1, cft2, ysh1, pta1, swd2, pfs2, dis2, yth1, ssu72, and fip1.

It is found in the nucleus. RNA-binding component of the cleavage and polyadenylation factor (CPF) complex, which plays a key role in polyadenylation-dependent pre-mRNA 3'-end formation and cooperates with cleavage factors including the CFIA complex and NAB4/CFIB. May be involved in poly(A)-site recognition. May be involved in the association of the CPF, CPFIA and RNA polymerase II complexes. In Schizosaccharomyces pombe (strain 972 / ATCC 24843) (Fission yeast), this protein is Cleavage factor two protein 2 (cft2).